A 398-amino-acid chain; its full sequence is Minor cardiolipin synthase ClsB (398 aa).

Residues V3 to F23 form a helical membrane-spanning segment. PLD phosphodiesterase domains follow at residues M141–Y168 and Y311–S338.

This sequence belongs to the phospholipase D family. Cardiolipin synthase subfamily.

The protein resides in the cell membrane. In terms of biological role, involved in the biosynthesis of cardiolipin. This is Minor cardiolipin synthase ClsB (clsB) from Bacillus subtilis (strain 168).